Here is a 392-residue protein sequence, read N- to C-terminus: Alpha-(1,3)-fucosyltransferase fut-6 (392 aa).

Residues M1–R12 lie on the Cytoplasmic side of the membrane. Residues Y13–V35 traverse the membrane as a helical; Signal-anchor for type II membrane protein segment. Residues P36–L392 lie on the Lumenal side of the membrane. The N-linked (GlcNAc...) asparagine glycan is linked to N158.

It belongs to the glycosyltransferase 10 family. It depends on Unlike other alpha-(1,3)-fucosyltransferases, appears not to require a divalent metal cation as cofactor. as a cofactor.

It localises to the golgi apparatus. The protein localises to the golgi stack membrane. It functions in the pathway protein modification; protein glycosylation. Its activity is regulated as follows. Inhibited by divalent metal cations. Functionally, involved in the fucosylation of N-glycans. Preferentially catalyzes the addition of fucose in alpha 1-3 linkage to the distal GlcNAc residue in N-glycans. Catalyzes the transfer of fucose to Gal-beta-1-4-GlcNAc-alpha-pNP (LN-pNP) and Gal-beta-1-4-GlcNAc-beta-1-3-Gal-beta-1-4-Glc (LNnT). Unlike alpha-(1,3)-fucosyltransferase fut-1, does not transfer fucose to Man-alpha-1-3-(Man-alpha-1-6)-Man-beta-1-4-GlcNAc-beta-1-4-GlcNAc-beta-1-Asn (M3), Man-alpha-1-3-(Man-alpha-1-6)-Man-beta-1-4-GlcNAc-beta-1-4-(Fuc-alpha-1-6)-GlcNAc-beta-1-Asn (M3F6) and GlcNAc-beta-1-2-Man-alpha-1-3-(GlcNAc-beta-1-2-Man-alpha-1-6)-Man-beta-1-4-GlcNAc-beta-1-4(Fuc-alpha-1-6)-GlcNAc-beta-1-Asn (GnM3F6). The chain is Alpha-(1,3)-fucosyltransferase fut-6 from Caenorhabditis elegans.